The primary structure comprises 176 residues: Adenylyl-sulfate kinase (176 aa).

Position 12–19 (12–19 (GLSGAGKT)) interacts with ATP. Catalysis depends on S86, which acts as the Phosphoserine intermediate.

This sequence belongs to the APS kinase family.

It catalyses the reaction adenosine 5'-phosphosulfate + ATP = 3'-phosphoadenylyl sulfate + ADP + H(+). Its pathway is sulfur metabolism; hydrogen sulfide biosynthesis; sulfite from sulfate: step 2/3. Its function is as follows. Catalyzes the synthesis of activated sulfate. This Synechococcus sp. (strain JA-3-3Ab) (Cyanobacteria bacterium Yellowstone A-Prime) protein is Adenylyl-sulfate kinase.